The primary structure comprises 307 residues: N-myc-interactor (307 aa).

Positions 1–24 (MEADKDDTQQILKEHSPDEFIKDE) are disordered. S16 bears the Phosphoserine mark. K22 is covalently cross-linked (Glycyl lysine isopeptide (Lys-Gly) (interchain with G-Cter in ubiquitin)). Residues 30 to 64 (IDEITKKNIQLKKEIQKLETELQEATKEFQIKEDI) adopt a coiled-coil conformation. 2 NID domains span residues 103–192 (GQAL…GEVD) and 201–292 (GSAV…EVDV).

It belongs to the NMI family. Interacts with MYCN and MYC, as well as with other transcription factors with a Zip, HLH or a HLH-Zip motif. Interacts with all STAT proteins except STAT2. Interacts with IRF7, the interaction is direct and leads to the inhibition of IRF7-mediated type I IFN production. Interacts (via coiled-coil domain) with TRIM21 (via the SPRY domain); the interaction leads to 'Lys-63'-linked ubiquitination of NMI. Interacts with IFI35; the interaction is direct and is facilitated by TRIM21. Interacts with TLR4; the interaction is direct and leads to NF-kappa-B activation. As to quaternary structure, (Microbial infection) Interacts with human cytomegalovirus protein UL23; this interaction inhibits NMI-mediated transcription of interferon-gamma stimulated genes. In terms of processing, ubiquitinated. 'Lys-63'-linked ubiquitination by TRIM21 promotes interaction with IFI35 and inhibits virus-triggered type I IFN-beta production. Expressed in adult spleen, liver, and kidney. Expressed in fetal thymus, liver, placenta, spleen, lung, and kidney but not brain. Expressed in macrophages.

It localises to the cytoplasm. The protein resides in the nucleus. Its subcellular location is the secreted. Its function is as follows. Acts as a signaling pathway regulator involved in innate immune system response. In response to interleukin 2/IL2 and interferon IFN-gamma/IFNG, interacts with signal transducer and activator of transcription/STAT which activate the transcription of downstream genes involved in a multitude of signals for development and homeostasis. Enhances the recruitment of CBP/p300 coactivators to STAT1 and STAT5, resulting in increased STAT1- and STAT5-dependent transcription. In response to interferon IFN-alpha, associates in a complex with signaling pathway regulator IFI35 to regulate immune response; the complex formation prevents proteasome-mediated degradation of IFI35. In complex with IFI35, inhibits virus-triggered type I IFN-beta production when ubiquitinated by ubiquitin-protein ligase TRIM21. In complex with IFI35, negatively regulates nuclear factor NF-kappa-B signaling by inhibiting the nuclear translocation, activation and transcription of NF-kappa-B subunit p65/RELA, resulting in the inhibition of endothelial cell proliferation, migration and re-endothelialization of injured arteries. Negatively regulates virus-triggered type I interferon/IFN production by inducing proteosome-dependent degradation of IRF7, a transcriptional regulator of type I IFN, thereby interfering with cellular antiviral responses. Beside its role as an intracellular signaling pathway regulator, also functions extracellularly as damage-associated molecular patterns (DAMPs) to promote inflammation, when actively released by macrophage to the extracellular space during cell injury or pathogen invasion. Macrophage-secreted NMI activates NF-kappa-B signaling in adjacent macrophages through Toll-like receptor 4/TLR4 binding and activation, thereby inducing NF-kappa-B translocation from the cytoplasm into the nucleus which promotes the release of pro-inflammatory cytokines. This chain is N-myc-interactor, found in Homo sapiens (Human).